The following is a 133-amino-acid chain: CDGSH iron-sulfur domain-containing protein 2 homolog (133 aa).

Topologically, residues 1-35 are lumenal; sequence MQSVSQVVKTSLPNYLSSLPVPDTFGGWFKLSFKD. Residues 36–58 form a helical membrane-spanning segment; that stretch reads WLALIPPTAVVVGIGYVTYRAFY. Residues 59 to 133 lie on the Cytoplasmic side of the membrane; the sequence is PKAHRTCKSG…NVGPIVIKKK (75 aa). Residues C99, C101, C110, and H114 each coordinate [2Fe-2S] cluster.

The protein belongs to the CISD protein family. CISD2 subfamily. The cofactor is [2Fe-2S] cluster.

It is found in the endoplasmic reticulum membrane. The sequence is that of CDGSH iron-sulfur domain-containing protein 2 homolog from Drosophila virilis (Fruit fly).